Here is a 523-residue protein sequence, read N- to C-terminus: FAD:protein FMN transferase (523 aa).

3 helical membrane passes run 88 to 108 (LLAG…VALA), 118 to 138 (GGAA…LVLL), and 169 to 189 (GLAL…TAPA). FAD contacts are provided by residues 277–279 (LFD) and Asp-336. Ala-339 contacts Mg(2+). FAD-binding positions include Lys-342 and 423–425 (HII). The Mg(2+) site is built by Asp-450 and Thr-454.

It in the N-terminal section; belongs to the RseC family. This sequence in the C-terminal section; belongs to the ApbE family. Requires Mg(2+) as cofactor.

It localises to the cell membrane. The enzyme catalyses L-threonyl-[protein] + FAD = FMN-L-threonyl-[protein] + AMP + H(+). Its function is as follows. Flavin transferase that catalyzes the transfer of the FMN moiety of FAD and its covalent binding to the hydroxyl group of a threonine residue in a target flavoprotein. Is likely involved in the modification of RnfG and RnfD. Required for nitrogen fixation. The sequence is that of FAD:protein FMN transferase from Rhodobacter capsulatus (Rhodopseudomonas capsulata).